A 307-amino-acid polypeptide reads, in one-letter code: UDP-N-acetylenolpyruvoylglucosamine reductase (307 aa).

The 164-residue stretch at 34–197 folds into the FAD-binding PCMH-type domain; that stretch reads VGGNAEALFR…LSASLKGRPG (164 aa). Arginine 177 is an active-site residue. Serine 226 functions as the Proton donor in the catalytic mechanism. The active site involves glutamate 296.

The protein belongs to the MurB family. It depends on FAD as a cofactor.

The protein resides in the cytoplasm. It catalyses the reaction UDP-N-acetyl-alpha-D-muramate + NADP(+) = UDP-N-acetyl-3-O-(1-carboxyvinyl)-alpha-D-glucosamine + NADPH + H(+). Its pathway is cell wall biogenesis; peptidoglycan biosynthesis. Its function is as follows. Cell wall formation. The polypeptide is UDP-N-acetylenolpyruvoylglucosamine reductase (Paramagnetospirillum magneticum (strain ATCC 700264 / AMB-1) (Magnetospirillum magneticum)).